The following is a 347-amino-acid chain: NADH-ubiquinone oxidoreductase chain 2 (347 aa).

The next 10 membrane-spanning stretches (helical) occupy residues 3-23 (PPIL…VLTS), 25-45 (HWLT…PILM), 60-80 (LLTQ…NLMF), 96-116 (AMVT…FWVP), 149-169 (IDPN…GWGG), 178-198 (ILAY…LYNP), 200-220 (MMLL…MLFM), 237-257 (APLI…LPPL), 274-294 (EMII…YFYM), and 323-343 (MILL…TPLL).

Belongs to the complex I subunit 2 family. Core subunit of respiratory chain NADH dehydrogenase (Complex I) which is composed of 45 different subunits. Interacts with TMEM242.

The protein resides in the mitochondrion inner membrane. It catalyses the reaction a ubiquinone + NADH + 5 H(+)(in) = a ubiquinol + NAD(+) + 4 H(+)(out). Core subunit of the mitochondrial membrane respiratory chain NADH dehydrogenase (Complex I) which catalyzes electron transfer from NADH through the respiratory chain, using ubiquinone as an electron acceptor. Essential for the catalytic activity and assembly of complex I. The protein is NADH-ubiquinone oxidoreductase chain 2 of Mungos mungo (Banded mongoose).